Reading from the N-terminus, the 494-residue chain is Gram-negative bacteria-binding protein 1 (494 aa).

Positions 1 to 19 (MPGLCIGILLLIGFGCTTA) are cleaved as a signal peptide. Residues 20-120 (YKIPTPTVEL…QPLPVCNLGG (101 aa)) form the CBM39 domain. Asparagine 56 and asparagine 81 each carry an N-linked (GlcNAc...) asparagine glycan. Positions 126 to 160 (GCSPGDDDFTDDNQLSTEDSALEPTAPSVCEPSES) are disordered. In terms of domain architecture, GH16 spans 135–494 (TDDNQLSTED…DYVRVFATDN (360 aa)). Asparagine 185 carries an N-linked (GlcNAc...) asparagine glycan.

Belongs to the insect beta-1,3-glucan binding protein family.

The protein resides in the cell membrane. Its function is as follows. Plays a key role in innate immunity by acting as a pattern recognition receptor for beta-1,3-glucan from fungi and lipopolysaccharide from Gram-negative bacteria. Upon recognition of invading microorganism-derived products, acts upstream of protease spz processing enzyme SPE to activate the Toll pathway and to induce the expression of antimicrobial peptides drosomycin, cecropin and attacin. This Drosophila melanogaster (Fruit fly) protein is Gram-negative bacteria-binding protein 1.